The sequence spans 289 residues: MHYHQLAVSGERRLTASRDSTTYDLTSADADLRTFGDLARVASIARTSVDRLAAELTEDADVVDDAFVDRHATVPVDAEEIWAAGVTYQISEQAREEESSMPDMYFDVYDADRPEVFFKATPSRTVEPGDAIGVRGDSEWDVPEPELGIVLRRGEIVGYTVGNDVSSRSIEGENPLYLPQAKVYDRCCSIGPCVVTPEDVEDPHELEMSMTIERDGEVIYDDATNTSEMVRSCDELVSYFTRHNTVPELAVILTGTSLVPEQPFDLQEGDHVDITIEGIGTLSNSVTTV.

Mg(2+)-binding residues include E144, E146, and D164.

This sequence belongs to the FAH family.

The catalysed reaction is 2-dehydro-3-deoxy-D-arabinonate = 2,5-dioxopentanoate + H2O. It participates in carbohydrate metabolism; D-xylose degradation. Its function is as follows. Probable 2-keto-3-deoxyxylonate dehydratase involved in the degradation of D-xylose, a major component of hemicelluloses such as xylan. Catalyzes the fourth reaction in the xylose utilization pathway through dehydratation of 2-dehydro-3-deoxy-D-xylonate into alpha-ketoglutarate semialdehyde (2,5-dioxopentanoate). The polypeptide is Probable 2-keto-3-deoxyxylonate dehydratase (Haloferax volcanii (strain ATCC 29605 / DSM 3757 / JCM 8879 / NBRC 14742 / NCIMB 2012 / VKM B-1768 / DS2) (Halobacterium volcanii)).